A 293-amino-acid polypeptide reads, in one-letter code: Phosphatidylserine decarboxylase proenzyme (293 aa).

Residues aspartate 88, histidine 144, and serine 247 each act as charge relay system; for autoendoproteolytic cleavage activity in the active site. Residue serine 247 is the Schiff-base intermediate with substrate; via pyruvic acid; for decarboxylase activity of the active site. Serine 247 is modified (pyruvic acid (Ser); by autocatalysis).

Belongs to the phosphatidylserine decarboxylase family. PSD-B subfamily. Prokaryotic type I sub-subfamily. In terms of assembly, heterodimer of a large membrane-associated beta subunit and a small pyruvoyl-containing alpha subunit. Requires pyruvate as cofactor. Is synthesized initially as an inactive proenzyme. Formation of the active enzyme involves a self-maturation process in which the active site pyruvoyl group is generated from an internal serine residue via an autocatalytic post-translational modification. Two non-identical subunits are generated from the proenzyme in this reaction, and the pyruvate is formed at the N-terminus of the alpha chain, which is derived from the carboxyl end of the proenzyme. The autoendoproteolytic cleavage occurs by a canonical serine protease mechanism, in which the side chain hydroxyl group of the serine supplies its oxygen atom to form the C-terminus of the beta chain, while the remainder of the serine residue undergoes an oxidative deamination to produce ammonia and the pyruvoyl prosthetic group on the alpha chain. During this reaction, the Ser that is part of the protease active site of the proenzyme becomes the pyruvoyl prosthetic group, which constitutes an essential element of the active site of the mature decarboxylase.

The protein resides in the cell membrane. It carries out the reaction a 1,2-diacyl-sn-glycero-3-phospho-L-serine + H(+) = a 1,2-diacyl-sn-glycero-3-phosphoethanolamine + CO2. It participates in phospholipid metabolism; phosphatidylethanolamine biosynthesis; phosphatidylethanolamine from CDP-diacylglycerol: step 2/2. Functionally, catalyzes the formation of phosphatidylethanolamine (PtdEtn) from phosphatidylserine (PtdSer). The polypeptide is Phosphatidylserine decarboxylase proenzyme (Xylella fastidiosa (strain M23)).